Consider the following 290-residue polypeptide: ATP synthase gamma chain (290 aa).

It belongs to the ATPase gamma chain family. As to quaternary structure, F-type ATPases have 2 components, CF(1) - the catalytic core - and CF(0) - the membrane proton channel. CF(1) has five subunits: alpha(3), beta(3), gamma(1), delta(1), epsilon(1). CF(0) has three main subunits: a, b and c.

Its subcellular location is the cell inner membrane. Functionally, produces ATP from ADP in the presence of a proton gradient across the membrane. The gamma chain is believed to be important in regulating ATPase activity and the flow of protons through the CF(0) complex. This chain is ATP synthase gamma chain, found in Dictyoglomus thermophilum (strain ATCC 35947 / DSM 3960 / H-6-12).